We begin with the raw amino-acid sequence, 235 residues long: Small ribosomal subunit protein uS10m (235 aa).

Residues Met1–Phe19 constitute a mitochondrion transit peptide.

Belongs to the universal ribosomal protein uS10 family. As to quaternary structure, part of the mitochondrial small ribosomal subunit.

It localises to the mitochondrion. Its function is as follows. Involved in mitochondrial genome encoded proteins translation. Involved in the binding of tRNA to the ribosomes. This Candida glabrata (strain ATCC 2001 / BCRC 20586 / JCM 3761 / NBRC 0622 / NRRL Y-65 / CBS 138) (Yeast) protein is Small ribosomal subunit protein uS10m (RSM10).